Consider the following 303-residue polypeptide: Recombination-associated protein RdgC (303 aa).

Belongs to the RdgC family.

The protein localises to the cytoplasm. It is found in the nucleoid. In terms of biological role, may be involved in recombination. The polypeptide is Recombination-associated protein RdgC (Shewanella loihica (strain ATCC BAA-1088 / PV-4)).